The primary structure comprises 868 residues: uncharacterized protein (868 aa).

Its subcellular location is the cytoplasm. It is found in the nucleus. This is an uncharacterized protein from Schizosaccharomyces pombe (strain 972 / ATCC 24843) (Fission yeast).